A 1638-amino-acid polypeptide reads, in one-letter code: Non-structural polyprotein 1AB (1638 aa).

A coiled-coil region spans residues 130–222 (LVHQVMEKTR…KEKENALVSV (93 aa)). Transmembrane regions (helical) follow at residues 220–240 (VSVG…FGLI), 379–398 (VMSY…VLAG), 407–427 (APFI…CVAV), 437–457 (FILF…LLWL), 479–499 (ALVY…GVTL), and 507–527 (ILMF…CTTI). Residues histidine 600, aspartate 632, and serine 697 each act as charge relay system; for serine protease activity in the active site. The stretch at 758-788 (KVSHAAILKELEELREEVQFLKKKCVTYDDY) forms a coiled coil. Tyrosine 834 carries the O-(5'-phospho-RNA)-tyrosine modification. In terms of domain architecture, RdRp catalytic spans 1381–1515 (RYFVEMDWTR…SIRKGFVEYE (135 aa)).

This sequence belongs to the astroviridae polyprotein 1AB family. As to quaternary structure, monomer. Post-translationally, cleaved by the viral and host proteases. The protease is probably autocatalytically cleaved.

The protein resides in the host membrane. The enzyme catalyses RNA(n) + a ribonucleoside 5'-triphosphate = RNA(n+1) + diphosphate. Responsible for the cleavage of the polyprotein into functional products. In terms of biological role, protein covalently attached to the 5' extremity of the genomic and subgenomic RNAs. It may serve as a primer for the replicase. The polypeptide is Non-structural polyprotein 1AB (ORF1) (Turkey astrovirus 2 (TAstV-2)).